The following is a 198-amino-acid chain: FMN-dependent NADH:quinone oxidoreductase (198 aa).

96 to 99 (MYNF) is an FMN binding site.

It belongs to the azoreductase type 1 family. Homodimer. Requires FMN as cofactor.

It catalyses the reaction 2 a quinone + NADH + H(+) = 2 a 1,4-benzosemiquinone + NAD(+). The catalysed reaction is N,N-dimethyl-1,4-phenylenediamine + anthranilate + 2 NAD(+) = 2-(4-dimethylaminophenyl)diazenylbenzoate + 2 NADH + 2 H(+). Functionally, quinone reductase that provides resistance to thiol-specific stress caused by electrophilic quinones. Its function is as follows. Also exhibits azoreductase activity. Catalyzes the reductive cleavage of the azo bond in aromatic azo compounds to the corresponding amines. In Burkholderia mallei (strain ATCC 23344), this protein is FMN-dependent NADH:quinone oxidoreductase.